The chain runs to 178 residues: uncharacterized protein (178 aa).

Residues 64 to 103 (GVSDNTNKTTAKDNVSDKSSENEVAQPKQVTPPVDATGNT) are disordered. A compositionally biased stretch (basic and acidic residues) spans 73 to 84 (TAKDNVSDKSSE).

This is an uncharacterized protein from Acidianus sp. F28 (AFV-2).